Consider the following 63-residue polypeptide: Conotoxin Cl14.11 (63 aa).

An N-terminal signal peptide occupies residues 1 to 21 (MRFLLLLTVALLLTCIMETDA). The propeptide occupies 22 to 34 (EAKPEDLAERFRE).

Post-translationally, contains 2 disulfide bond. In terms of tissue distribution, expressed by the venom duct.

It is found in the secreted. The chain is Conotoxin Cl14.11 from Californiconus californicus (California cone).